The primary structure comprises 644 residues: UvrABC system protein C (644 aa).

One can recognise a GIY-YIG domain in the interval 47 to 125 (ARPGVYRMLD…IKRYRPPYNV (79 aa)). Residues 235–270 (TAVQKRLGEAMTRAADAMDFEQAAVLRDRLKALTFI) form the UVR domain.

It belongs to the UvrC family. Interacts with UvrB in an incision complex.

The protein localises to the cytoplasm. Functionally, the UvrABC repair system catalyzes the recognition and processing of DNA lesions. UvrC both incises the 5' and 3' sides of the lesion. The N-terminal half is responsible for the 3' incision and the C-terminal half is responsible for the 5' incision. This is UvrABC system protein C from Sphingopyxis alaskensis (strain DSM 13593 / LMG 18877 / RB2256) (Sphingomonas alaskensis).